The primary structure comprises 368 residues: Mitochondrial intermembrane space import and assembly protein 40 (368 aa).

The transit peptide at 1–29 (MYRNTMRSASRPVIASLRSSTIRAAPRRF) directs the protein to the mitochondrion. The Mitochondrial matrix segment spans residues 30–47 (ASTAPADKPRSFKGSLVR). The helical; Signal-anchor for type II membrane protein transmembrane segment at 48 to 65 (LGLAFGAVYYYNTSPIFA) threads the bilayer. Residues 66–368 (DEAISKTVPA…AAKKNAEKKQ (303 aa)) are Mitochondrial intermembrane-facing. Over residues 95–104 (RKQIKAKSEE) the composition is skewed to basic and acidic residues. The tract at residues 95–144 (RKQIKAKSEETAASSKTPESQQSNPQTAAADGSPAALEEEAGQQGAFNPE) is disordered. Positions 105-121 (TAASSKTPESQQSNPQT) are enriched in polar residues. Intrachain disulfides connect cysteine 152-cysteine 154, cysteine 163-cysteine 196, and cysteine 173-cysteine 186. Positions 160-204 (DGPCGEEFKTAFSCFVFSQEEPKGMDCIDKFQGMQECFKKYPDIY) constitute a CHCH domain. 2 short sequence motifs (cx9C motif) span residues 163–173 (CGEEFKTAFSC) and 186–196 (CIDKFQGMQEC). The segment at 208 to 310 (LADDEDGAPT…GSRMVQDVAI (103 aa)) is disordered. Positions 240–263 (LARETKDKTAADATKFDDSQKPAE) are enriched in basic and acidic residues. Low complexity predominate over residues 264 to 280 (SKTPAKTTSTSTDSAQK). The segment covering 283–295 (VDAHRDAEPKSDA) has biased composition (basic and acidic residues).

As to quaternary structure, monomer. Cu(2+) is required as a cofactor. Requires Zn(2+) as cofactor.

It localises to the mitochondrion inner membrane. In terms of biological role, required for the import and folding of small cysteine-containing proteins (small Tim) in the mitochondrial intermembrane space (IMS). Forms a redox cycle with ERV1 that involves a disulfide relay system. Precursor proteins to be imported into the IMS are translocated in their reduced form into the mitochondria. The oxidized form of MIA40 forms a transient intermolecular disulfide bridge with the reduced precursor protein, resulting in oxidation of the precursor protein that now contains an intramolecular disulfide bond and is able to undergo folding in the IMS. The polypeptide is Mitochondrial intermembrane space import and assembly protein 40 (MIA40) (Gibberella zeae (strain ATCC MYA-4620 / CBS 123657 / FGSC 9075 / NRRL 31084 / PH-1) (Wheat head blight fungus)).